The chain runs to 251 residues: Regulator of G-protein signaling 7-binding protein B (251 aa).

The disordered stretch occupies residues 1 to 43 (MCSAPNGRKNRPRSAANIFQIGKSSVRDPERRESTESARRAQR). Residues 25–43 (SVRDPERRESTESARRAQR) show a composition bias toward basic and acidic residues. Residues cysteine 246 and cysteine 247 are each lipidated (S-palmitoyl cysteine).

Belongs to the RGS7BP/RGS9BP family. In terms of processing, palmitoylated. Undergoes rapid palmitoylation turnover. Palmitoylation regulates the cell membrane and nuclear shuttling and the regulation of GPCR signaling. Upon depalmitoylation, it is targeted from the plasma membrane into the nucleus. GPCR signaling inhibits depalmitoylation and promotes localization to the plasma membrane.

The protein resides in the nucleus. It localises to the cytoplasm. It is found in the cell membrane. Its function is as follows. Regulator of G protein-coupled receptor (GPCR) signaling. Regulatory subunit of the R7-Gbeta5 complexes that acts by controlling the subcellular location of the R7-Gbeta5 complexes. When palmitoylated, it targets the R7-Gbeta5 complexes to the plasma membrane, leading to inhibit G protein alpha subunits. When it is unpalmitoylated, the R7-Gbeta5 complexes undergo a nuclear/cytoplasmic shuttling. This Danio rerio (Zebrafish) protein is Regulator of G-protein signaling 7-binding protein B (rgs7bpb).